The following is a 103-amino-acid chain: Small ribosomal subunit protein uS10 (103 aa).

This sequence belongs to the universal ribosomal protein uS10 family. In terms of assembly, part of the 30S ribosomal subunit.

Functionally, involved in the binding of tRNA to the ribosomes. This chain is Small ribosomal subunit protein uS10, found in Leptothrix cholodnii (strain ATCC 51168 / LMG 8142 / SP-6) (Leptothrix discophora (strain SP-6)).